Reading from the N-terminus, the 597-residue chain is Elongation factor 4 (597 aa).

The tr-type G domain maps to 4–181; it reads SKIRNFSIIA…EIVDKISYPI (178 aa). Residues 16–21 and 128–131 contribute to the GTP site; these read DHGKST and NKID.

The protein belongs to the TRAFAC class translation factor GTPase superfamily. Classic translation factor GTPase family. LepA subfamily.

It localises to the cell membrane. The enzyme catalyses GTP + H2O = GDP + phosphate + H(+). Required for accurate and efficient protein synthesis under certain stress conditions. May act as a fidelity factor of the translation reaction, by catalyzing a one-codon backward translocation of tRNAs on improperly translocated ribosomes. Back-translocation proceeds from a post-translocation (POST) complex to a pre-translocation (PRE) complex, thus giving elongation factor G a second chance to translocate the tRNAs correctly. Binds to ribosomes in a GTP-dependent manner. The polypeptide is Elongation factor 4 (Mycoplasmopsis pulmonis (strain UAB CTIP) (Mycoplasma pulmonis)).